The primary structure comprises 257 residues: Imidazole glycerol phosphate synthase subunit HisF (257 aa).

Residues aspartate 12 and aspartate 131 contribute to the active site.

Belongs to the HisA/HisF family. As to quaternary structure, heterodimer of HisH and HisF.

The protein localises to the cytoplasm. The catalysed reaction is 5-[(5-phospho-1-deoxy-D-ribulos-1-ylimino)methylamino]-1-(5-phospho-beta-D-ribosyl)imidazole-4-carboxamide + L-glutamine = D-erythro-1-(imidazol-4-yl)glycerol 3-phosphate + 5-amino-1-(5-phospho-beta-D-ribosyl)imidazole-4-carboxamide + L-glutamate + H(+). It participates in amino-acid biosynthesis; L-histidine biosynthesis; L-histidine from 5-phospho-alpha-D-ribose 1-diphosphate: step 5/9. IGPS catalyzes the conversion of PRFAR and glutamine to IGP, AICAR and glutamate. The HisF subunit catalyzes the cyclization activity that produces IGP and AICAR from PRFAR using the ammonia provided by the HisH subunit. The polypeptide is Imidazole glycerol phosphate synthase subunit HisF (Burkholderia pseudomallei (strain 1106a)).